A 505-amino-acid polypeptide reads, in one-letter code: Transcription factor VHR2 (505 aa).

The span at 1 to 16 shows a compositional bias: basic and acidic residues; sequence MIDDTENSKIHLEGSH. Disordered stretches follow at residues 1 to 23, 105 to 179, and 421 to 460; these read MIDD…KYTG, NRKR…LPYP, and QSNP…STSA. Positions 133–148 are enriched in low complexity; that stretch reads PSSSNMGSCSASNASS. A compositionally biased stretch (polar residues) spans 421–443; it reads QSNPMRPHSTSEVLSAHSSTKDA.

It belongs to the VHR1 family.

It localises to the nucleus. In terms of biological role, transcription factor that regulates ERG9, but seems to have a more global function in transcription. The polypeptide is Transcription factor VHR2 (VHR2) (Saccharomyces cerevisiae (strain ATCC 204508 / S288c) (Baker's yeast)).